Here is a 524-residue protein sequence, read N- to C-terminus: Ribonuclease Y (524 aa).

A helical membrane pass occupies residues 7 to 27; it reads LGGLLTGIVIAIIASIIASVI. Residues 214–299 form the KH domain; that stretch reads TVSVVPLPND…EMVEKARKEV (86 aa). An HD domain is found at 340–433; that stretch reads VLSHSIEVAR…VQAADSISAA (94 aa).

Belongs to the RNase Y family.

The protein resides in the cell membrane. Functionally, endoribonuclease that initiates mRNA decay. This chain is Ribonuclease Y, found in Acetivibrio thermocellus (strain ATCC 27405 / DSM 1237 / JCM 9322 / NBRC 103400 / NCIMB 10682 / NRRL B-4536 / VPI 7372) (Clostridium thermocellum).